The chain runs to 522 residues: Aspartic and glutamic acid-rich protein (522 aa).

The first 16 residues, 1–16 (MKVFVYLLVTFSLTNA), serve as a signal peptide directing secretion. Composition is skewed to basic and acidic residues over residues 72-81 (YDDFFPKDTS) and 93-102 (SRNDDGYDLA). Residues 72 to 497 (YDDFFPKDTS…KSKDAAQGNI (426 aa)) form a disordered region. The span at 109–125 (DDEEAYDDFDEVDDRAD) shows a compositional bias: acidic residues. Basic and acidic residues predominate over residues 142 to 152 (KLPAEEESKND). Composition is skewed to acidic residues over residues 153-166 (MDEE…EEDK), 173-200 (FAED…EDEV), 228-261 (DNEE…DESD), and 267-283 (EVED…TEEG). Basic and acidic residues predominate over residues 284–343 (SEIKQNDETEEQPEKKFDADKEHEDAPEPLKEKLSDESKARAEDESDKSEDAAKEIKEPE). A coiled-coil region spans residues 319–465 (DESKARAEDE…KSNLALKRDE (147 aa)). Over residues 358 to 374 (DEAELLDDEAELSDDEA) the composition is skewed to acidic residues. Basic and acidic residues-rich tracts occupy residues 375–397 (ELSK…KAEK), 407–453 (DEAK…EFAK), and 461–491 (LKRD…KSKD).

Component of the acid-soluble organic matrix of the aragonitic skeleton (at protein level).

The protein localises to the secreted. The protein is Aspartic and glutamic acid-rich protein of Acropora millepora (Staghorn coral).